The chain runs to 131 residues: Small ribosomal subunit protein uS8 (131 aa).

It belongs to the universal ribosomal protein uS8 family. Part of the 30S ribosomal subunit. Contacts proteins S5 and S12.

Functionally, one of the primary rRNA binding proteins, it binds directly to 16S rRNA central domain where it helps coordinate assembly of the platform of the 30S subunit. The chain is Small ribosomal subunit protein uS8 from Methylococcus capsulatus (strain ATCC 33009 / NCIMB 11132 / Bath).